The primary structure comprises 263 residues: Type III pantothenate kinase (263 aa).

Residue D6–K13 participates in ATP binding. Residues Y92 and G99 to R102 contribute to the substrate site. The active-site Proton acceptor is the D101. Position 124 (T124) interacts with ATP. T174 lines the substrate pocket.

It belongs to the type III pantothenate kinase family. Homodimer. The cofactor is NH4(+). Requires K(+) as cofactor.

Its subcellular location is the cytoplasm. It catalyses the reaction (R)-pantothenate + ATP = (R)-4'-phosphopantothenate + ADP + H(+). It participates in cofactor biosynthesis; coenzyme A biosynthesis; CoA from (R)-pantothenate: step 1/5. In terms of biological role, catalyzes the phosphorylation of pantothenate (Pan), the first step in CoA biosynthesis. This chain is Type III pantothenate kinase, found in Azoarcus sp. (strain BH72).